The primary structure comprises 512 residues: Bifunctional purine biosynthesis protein PurH (512 aa).

The region spanning 1 to 150 (MIGEERVVRA…KNFPAVLVLV (150 aa)) is the MGS-like domain.

Belongs to the PurH family.

The catalysed reaction is (6R)-10-formyltetrahydrofolate + 5-amino-1-(5-phospho-beta-D-ribosyl)imidazole-4-carboxamide = 5-formamido-1-(5-phospho-D-ribosyl)imidazole-4-carboxamide + (6S)-5,6,7,8-tetrahydrofolate. It carries out the reaction IMP + H2O = 5-formamido-1-(5-phospho-D-ribosyl)imidazole-4-carboxamide. The protein operates within purine metabolism; IMP biosynthesis via de novo pathway; 5-formamido-1-(5-phospho-D-ribosyl)imidazole-4-carboxamide from 5-amino-1-(5-phospho-D-ribosyl)imidazole-4-carboxamide (10-formyl THF route): step 1/1. Its pathway is purine metabolism; IMP biosynthesis via de novo pathway; IMP from 5-formamido-1-(5-phospho-D-ribosyl)imidazole-4-carboxamide: step 1/1. This Chloroflexus aurantiacus (strain ATCC 29366 / DSM 635 / J-10-fl) protein is Bifunctional purine biosynthesis protein PurH.